The following is a 409-amino-acid chain: Tryptophan synthase beta chain (409 aa).

K86 is modified (N6-(pyridoxal phosphate)lysine).

Belongs to the TrpB family. As to quaternary structure, tetramer of two alpha and two beta chains. Pyridoxal 5'-phosphate is required as a cofactor.

It catalyses the reaction (1S,2R)-1-C-(indol-3-yl)glycerol 3-phosphate + L-serine = D-glyceraldehyde 3-phosphate + L-tryptophan + H2O. It functions in the pathway amino-acid biosynthesis; L-tryptophan biosynthesis; L-tryptophan from chorismate: step 5/5. In terms of biological role, the beta subunit is responsible for the synthesis of L-tryptophan from indole and L-serine. The polypeptide is Tryptophan synthase beta chain (Shewanella pealeana (strain ATCC 700345 / ANG-SQ1)).